The chain runs to 444 residues: Ribitol-5-phosphate xylosyltransferase 1 (444 aa).

Topologically, residues 1–9 are cytoplasmic; that stretch reads MRLTRTRLC. Residues 10–30 traverse the membrane as a helical; Signal-anchor for type II membrane protein segment; sequence SLLVALYCLFSIYAAYHVFFG. Residues 31-444 are Extracellular-facing; it reads RRRRPLGTTS…ESSFFINNKV (414 aa). A disordered region spans residues 38-79; sequence TTSRNSRKAAAAQAKERRGREQSALESEEWNPWEGDEKNEQR. Residues 51-60 show a composition bias toward basic and acidic residues; the sequence is AKERRGREQS.

The protein belongs to the RXYLT1 family. In terms of assembly, forms a complex composed of FKTN/fukutin, FKRP and RXYLT1/TMEM5.

It is found in the golgi apparatus membrane. It carries out the reaction 3-O-[Rib-ol-P-Rib-ol-P-3-beta-D-GalNAc-(1-&gt;3)-beta-D-GlcNAc-(1-&gt;4)-(O-6-P-alpha-D-Man)]-Thr-[protein] + UDP-alpha-D-xylose = 3-O-[beta-D-Xyl-(1-&gt;4)-Rib-ol-P-Rib-ol-P-3-beta-D-GalNAc-(1-&gt;3)-beta-D-GlcNAc-(1-&gt;4)-(O-6-P-alpha-D-Man)]-Thr-[protein] + UDP + H(+). It participates in protein modification; protein glycosylation. Acts as a UDP-D-xylose:ribitol-5-phosphate beta1,4-xylosyltransferase, which catalyzes the transfer of UDP-D-xylose to ribitol 5-phosphate (Rbo5P) to form the Xylbeta1-4Rbo5P linkage on O-mannosyl glycan. Participates in the biosynthesis of the phosphorylated O-mannosyl trisaccharide (N-acetylgalactosamine-beta-3-N-acetylglucosamine-beta-4-(phosphate-6-)mannose), a carbohydrate structure present in alpha-dystroglycan (DAG1), which is required for binding laminin G-like domain-containing extracellular proteins with high affinity. This chain is Ribitol-5-phosphate xylosyltransferase 1, found in Mus musculus (Mouse).